Here is a 213-residue protein sequence, read N- to C-terminus: RNA chaperone ProQ (213 aa).

The segment at 105–150 (ESQEKAKAKRAAQTPKAAPAGKAPAKKAPKKVAVPARKTERPAKAA) is disordered. Low complexity predominate over residues 115-127 (AAQTPKAAPAGKA).

Belongs to the ProQ family.

It localises to the cytoplasm. Functionally, RNA chaperone with significant RNA binding, RNA strand exchange and RNA duplexing activities. In Shewanella oneidensis (strain ATCC 700550 / JCM 31522 / CIP 106686 / LMG 19005 / NCIMB 14063 / MR-1), this protein is RNA chaperone ProQ.